A 347-amino-acid polypeptide reads, in one-letter code: Phosphoribosylformylglycinamidine cyclo-ligase (347 aa).

The protein belongs to the AIR synthase family.

The protein localises to the cytoplasm. It carries out the reaction 2-formamido-N(1)-(5-O-phospho-beta-D-ribosyl)acetamidine + ATP = 5-amino-1-(5-phospho-beta-D-ribosyl)imidazole + ADP + phosphate + H(+). It participates in purine metabolism; IMP biosynthesis via de novo pathway; 5-amino-1-(5-phospho-D-ribosyl)imidazole from N(2)-formyl-N(1)-(5-phospho-D-ribosyl)glycinamide: step 2/2. This is Phosphoribosylformylglycinamidine cyclo-ligase from Alcanivorax borkumensis (strain ATCC 700651 / DSM 11573 / NCIMB 13689 / SK2).